Reading from the N-terminus, the 203-residue chain is Large ribosomal subunit protein uL3 (203 aa).

This sequence belongs to the universal ribosomal protein uL3 family. As to quaternary structure, part of the 50S ribosomal subunit. Forms a cluster with proteins L14 and L19.

One of the primary rRNA binding proteins, it binds directly near the 3'-end of the 23S rRNA, where it nucleates assembly of the 50S subunit. This chain is Large ribosomal subunit protein uL3, found in Christiangramia forsetii (strain DSM 17595 / CGMCC 1.15422 / KT0803) (Gramella forsetii).